We begin with the raw amino-acid sequence, 484 residues long: Probable receptor-like protein kinase At5g18500 (484 aa).

A helical membrane pass occupies residues 21 to 41; sequence IIVIVLSAIFVVVLAISLWLT. Residues 72-135 form a disordered region; that stretch reads RVDEVSSSNG…SVSSANPLTA (64 aa). Over residues 91–105 the composition is skewed to basic and acidic residues; sequence KFGDKEPEKGIKAES. Residues 125-134 show a composition bias toward polar residues; the sequence is SSVSSANPLT. Threonine 155 is subject to Phosphothreonine. The 280-residue stretch at 166-445 folds into the Protein kinase domain; that stretch reads FSRDNIIGDG…MLESEEYPIA (280 aa). ATP is bound by residues 172–180 and lysine 194; that span reads IGDGGYGVV. Position 239 is a phosphotyrosine (tyrosine 239). Aspartate 292 acts as the Proton acceptor in catalysis. The residue at position 296 (serine 296) is a Phosphoserine. A phosphothreonine mark is found at threonine 326 and threonine 331. Position 339 is a phosphotyrosine (tyrosine 339). A disordered region spans residues 425–484; sequence EKRPRMSQVARMLESEEYPIAREDRRRRRSQNGTTRDSDPPRNSTDTDKSEYHDLKPEGG. Residues 460–484 show a composition bias toward basic and acidic residues; that stretch reads RDSDPPRNSTDTDKSEYHDLKPEGG.

It belongs to the protein kinase superfamily. Ser/Thr protein kinase family.

The protein resides in the cell membrane. The catalysed reaction is L-seryl-[protein] + ATP = O-phospho-L-seryl-[protein] + ADP + H(+). It catalyses the reaction L-threonyl-[protein] + ATP = O-phospho-L-threonyl-[protein] + ADP + H(+). The sequence is that of Probable receptor-like protein kinase At5g18500 from Arabidopsis thaliana (Mouse-ear cress).